Consider the following 151-residue polypeptide: Caveolin-3 (151 aa).

The Cytoplasmic portion of the chain corresponds to 1–83 (MMTEEHTDLE…RLLSTLLGVP (83 aa)). Residue K38 forms a Glycyl lysine isopeptide (Lys-Gly) (interchain with G-Cter in SUMO3) linkage. Positions 84–104 (LALLWGFLFACISFCHIWAVV) form an intramembrane region, helical. Over 105–151 (PCIKSYLIEIQCISHIYSLCIRTFCNPLFAALGQVCSNIKVVLRREG) the chain is Cytoplasmic.

Belongs to the caveolin family. Homooligomer. Interacts with DYSF. Interacts with DLG1 and KCNA5; forms a ternary complex. Interacts with DAG1 (via its C-terminal); the interaction prevents binding of DAG1 with DMD. Interacts with TRIM72. Interacts with MUSK; may regulate MUSK signaling. Interacts with POPDC1. Interacts with CAVIN1, CAVIN2 and CAVIN4. In terms of processing, sumoylation with SUMO3 by PIAS4 may reduce agonist-induced internalization and desensitization of adrenergic receptor ABRD2. In terms of tissue distribution, expressed predominantly in muscle.

Its subcellular location is the golgi apparatus membrane. The protein resides in the cell membrane. It is found in the membrane. The protein localises to the caveola. It localises to the sarcolemma. In terms of biological role, may act as a scaffolding protein within caveolar membranes. Interacts directly with G-protein alpha subunits and can functionally regulate their activity. May also regulate voltage-gated potassium channels. Plays a role in the sarcolemma repair mechanism of both skeletal muscle and cardiomyocytes that permits rapid resealing of membranes disrupted by mechanical stress. Mediates the recruitment of CAVIN2 and CAVIN3 proteins to the caveolae. This is Caveolin-3 (Cav3) from Rattus norvegicus (Rat).